The primary structure comprises 276 residues: Secretagogin (276 aa).

EF-hand domains are found at residues 12–47 (LDAACFWQIWQRFDKDEKGYIKETELDAFFDDLLAK), 105–140 (DNSVEFMQIWRKYDADSSGFISAAELSNFLRDLFLH), 149–184 (ELEEYTSTMEKIFDRNKDGRLDLNDLARILALQENF), 197–232 (ERKRDFEKIFAHYDVSKTGALEGPEVDGFVKDMMEL), and 240–276 (VDLDKFREILLRHCDVNKDGKIQKSELALCLGLKINP). 18 residues coordinate Ca(2+): aspartate 118, aspartate 120, serine 122, glutamate 129, aspartate 162, asparagine 164, aspartate 166, arginine 168, aspartate 173, aspartate 210, serine 212, threonine 214, glutamate 221, aspartate 254, asparagine 256, aspartate 258, lysine 260, and glutamate 265.

In terms of tissue distribution, highly expressed in pancreas, in particular in pancreatic islets and pancreatic beta-cells. Detected in prostate, adrenal gland, small intestine, stomach and thyroid (at protein level).

The protein localises to the cytoplasm. It localises to the secreted. Its subcellular location is the cytoplasmic vesicle. It is found in the secretory vesicle membrane. The polypeptide is Secretagogin (Scgn) (Rattus norvegicus (Rat)).